Reading from the N-terminus, the 446-residue chain is Serum factor response D (446 aa).

In terms of domain architecture, MADS-box spans 1–61 (MGRKKIKIQR…PNAKEKYFQY (61 aa)). Disordered stretches follow at residues 95–195 (KKEK…FNSS), 210–296 (TQEN…CQQV), and 319–432 (CSSP…SNLN). Basic and acidic residues predominate over residues 112–121 (SHSEEEDHKS). Basic residues predominate over residues 133 to 142 (HHNHHHHHHQ). 2 stretches are compositionally biased toward low complexity: residues 143–195 (YNNN…FNSS) and 216–282 (HYNN…NNNN). A compositionally biased stretch (polar residues) spans 322 to 355 (PEDTSPMTSPRTPPFSSTNTNTLQTSPNSQQKSK). Low complexity predominate over residues 365 to 432 (NNNQNNNNQN…SPTSSSSNLN (68 aa)).

Its subcellular location is the nucleus. The sequence is that of Serum factor response D (srfD) from Dictyostelium discoideum (Social amoeba).